Reading from the N-terminus, the 287-residue chain is 4-hydroxybenzoate octaprenyltransferase (287 aa).

5 helical membrane passes run 35–55 (FAAGGLPDLKVFIIFVIGVVV), 96–116 (LFGVMGLFAFSLVLMLNPLVV), 211–231 (IIAAFQLAALSCFIIAGMLAG), 235–255 (IYGLGILAFIGFAVYQQKLIY), and 262–282 (CFTAFLNNNWAGMVLYIALTL).

The protein belongs to the UbiA prenyltransferase family. Mg(2+) serves as cofactor.

The protein localises to the cell inner membrane. The enzyme catalyses all-trans-octaprenyl diphosphate + 4-hydroxybenzoate = 4-hydroxy-3-(all-trans-octaprenyl)benzoate + diphosphate. It participates in cofactor biosynthesis; ubiquinone biosynthesis. In terms of biological role, catalyzes the prenylation of para-hydroxybenzoate (PHB) with an all-trans polyprenyl group. Mediates the second step in the final reaction sequence of ubiquinone-8 (UQ-8) biosynthesis, which is the condensation of the polyisoprenoid side chain with PHB, generating the first membrane-bound Q intermediate 3-octaprenyl-4-hydroxybenzoate. The protein is 4-hydroxybenzoate octaprenyltransferase of Shewanella halifaxensis (strain HAW-EB4).